The sequence spans 602 residues: (R)-limonene synthase (602 aa).

Residues Asp356, Asp360, Asp500, Thr504, and Glu508 each contribute to the Mg(2+) site. Positions 356-360 (DDVYD) match the DDXXD motif motif.

Belongs to the terpene synthase family. It depends on Mg(2+) as a cofactor. Mn(2+) serves as cofactor.

It catalyses the reaction (2E)-geranyl diphosphate = (4R)-limonene + diphosphate. In terms of biological role, catalyzes the formation of (R)-(+)-limonene, terpinolene, (1R,5S)-(+)-camphene, (1R,5R)-(+)-alpha-pinene, beta-myrcene and traces of alpha-phellandrene. The polypeptide is (R)-limonene synthase (Lavandula angustifolia (Lavender)).